The chain runs to 236 residues: Mediator of RNA polymerase II transcription subunit 20 (236 aa).

Belongs to the Mediator complex subunit 20 family. As to quaternary structure, component of the Mediator complex.

It is found in the nucleus. Functionally, component of the Mediator complex, a coactivator involved in the regulated transcription of nearly all RNA polymerase II-dependent genes. Mediator functions as a bridge to convey information from gene-specific regulatory proteins to the basal RNA polymerase II transcription machinery. Mediator is recruited to promoters by direct interactions with regulatory proteins and serves as a scaffold for the assembly of a functional preinitiation complex with RNA polymerase II and the general transcription factors. This chain is Mediator of RNA polymerase II transcription subunit 20 (SRB2), found in Debaryomyces hansenii (strain ATCC 36239 / CBS 767 / BCRC 21394 / JCM 1990 / NBRC 0083 / IGC 2968) (Yeast).